The sequence spans 43 residues: Thymosin beta-b (43 aa).

Composition is skewed to basic and acidic residues over residues 1–25 and 33–43; these read MADKPDISEVSQFDKTKLKKTETQE and ETIEQEKQCEA. A disordered region spans residues 1–43; it reads MADKPDISEVSQFDKTKLKKTETQEKNTLPTKETIEQEKQCEA.

The protein belongs to the thymosin beta family.

It is found in the cytoplasm. Its subcellular location is the cytoskeleton. Its function is as follows. Plays an important role in the organization of the cytoskeleton. Binds to and sequesters actin monomers (G actin) and therefore inhibits actin polymerization. This is Thymosin beta-b from Cyprinus carpio (Common carp).